A 300-amino-acid polypeptide reads, in one-letter code: Free fatty acid receptor 1 (300 aa).

Residues 1–8 are Extracellular-facing; that stretch reads MDLPPQLS. A helical transmembrane segment spans residues 9–31; it reads FALYVAAFALGFPLNVLAIRGAR. At 32–41 the chain is on the cytoplasmic side; it reads AHARRRLTPS. A helical membrane pass occupies residues 42–64; it reads LVYALNLGCSDLLLTVSLPLKAV. Topologically, residues 65–79 are extracellular; the sequence is EALASGAWPLPASLC. Cysteines 79 and 170 form a disulfide. The chain crosses the membrane as a helical span at residues 80 to 101; sequence PVFGVAHFAPLYAGGGFLAALS. Topologically, residues 102 to 121 are cytoplasmic; sequence AGRYLGAAFPLGYQAFRRPC. A helical membrane pass occupies residues 122-142; that stretch reads YSWGVCAAIWALVLCHLGLVF. Residues 143-178 are Extracellular-facing; sequence VLEAPGGWLDHSNTSLGINTPVNGSPVCLEAWDPAS. The N-linked (GlcNAc...) asparagine glycan is linked to N155. A helical transmembrane segment spans residues 179 to 200; sequence AGPARFSLSLLLFFLPLAITAF. Residues 201-223 are Cytoplasmic-facing; it reads CYVGCLRALAHSGLTHRRKLRAA. Residues 224–248 form a helical membrane-spanning segment; sequence WVAGGALLTLLLCVGPYNASNVASF. The Extracellular segment spans residues 249–256; that stretch reads LNPNLGGS. A helical transmembrane segment spans residues 257 to 279; the sequence is WRKLGLITGAWSVVLNPLVTGYL. Residues 280 to 300 lie on the Cytoplasmic side of the membrane; sequence GRGPGLKTVCAARTQGSTSQK.

This sequence belongs to the G-protein coupled receptor 1 family.

Its subcellular location is the cell membrane. Functionally, G-protein coupled receptor for medium and long chain saturated and unsaturated fatty acids that plays an important role in glucose homeostasis. Fatty acid binding increases glucose-stimulated insulin secretion, and may also enhance the secretion of glucagon-like peptide 1 (GLP-1). May also play a role in bone homeostasis; receptor signaling activates pathways that inhibit osteoclast differentiation. Ligand binding leads to a conformation change that triggers signaling via G-proteins that activate phospholipase C, leading to an increase of the intracellular calcium concentration. Seems to act through a G(q) and G(i)-mediated pathway. Mediates the anti-inflammatory effects of omega-3 polyunsaturated fatty acids (PUFAs) via inhibition of NLRP3 inflammasome activation. This Macaca fascicularis (Crab-eating macaque) protein is Free fatty acid receptor 1 (FFAR1).